We begin with the raw amino-acid sequence, 196 residues long: ATP-dependent Clp protease proteolytic subunit (196 aa).

S99 acts as the Nucleophile in catalysis. Residue H124 is part of the active site.

Belongs to the peptidase S14 family. As to quaternary structure, fourteen ClpP subunits assemble into 2 heptameric rings which stack back to back to give a disk-like structure with a central cavity, resembling the structure of eukaryotic proteasomes.

It localises to the cytoplasm. The catalysed reaction is Hydrolysis of proteins to small peptides in the presence of ATP and magnesium. alpha-casein is the usual test substrate. In the absence of ATP, only oligopeptides shorter than five residues are hydrolyzed (such as succinyl-Leu-Tyr-|-NHMec, and Leu-Tyr-Leu-|-Tyr-Trp, in which cleavage of the -Tyr-|-Leu- and -Tyr-|-Trp bonds also occurs).. Functionally, cleaves peptides in various proteins in a process that requires ATP hydrolysis. Has a chymotrypsin-like activity. Plays a major role in the degradation of misfolded proteins. This Nitratiruptor sp. (strain SB155-2) protein is ATP-dependent Clp protease proteolytic subunit.